The chain runs to 985 residues: DNA ligase 4 (985 aa).

Disordered stretches follow at residues 1 to 27 (MDRL…RNKH) and 43 to 70 (LNGN…QTLS). Residues 10–20 (ETERELDEKYP) are compositionally biased toward basic and acidic residues. A compositionally biased stretch (basic residues) spans 46–61 (NKKRPTGPAAARKKLG). The ATP site is built by glutamate 310, lysine 312, leucine 313, arginine 317, glutamate 379, phenylalanine 420, glutamate 480, lysine 485, lysine 502, and lysine 504. The N6-AMP-lysine intermediate role is filled by lysine 312. Glutamate 379 is a Mg(2+) binding site. Glutamate 480 lines the Mg(2+) pocket. BRCT domains lie at 711 to 804 (PSGH…PDLL) and 878 to 983 (LRGW…RFAP).

Belongs to the ATP-dependent DNA ligase family. The cofactor is Mg(2+).

It localises to the nucleus. The enzyme catalyses ATP + (deoxyribonucleotide)n-3'-hydroxyl + 5'-phospho-(deoxyribonucleotide)m = (deoxyribonucleotide)n+m + AMP + diphosphate.. Functionally, DNA ligase involved in DNA non-homologous end joining (NHEJ); required for double-strand break (DSB) repair. In Coccidioides immitis (strain RS) (Valley fever fungus), this protein is DNA ligase 4 (LIG4).